Consider the following 392-residue polypeptide: Magnesium-chelatase 38 kDa subunit (392 aa).

A compositionally biased stretch (low complexity) spans Met-1 to Ser-17. Positions Met-1–Glu-21 are disordered. Residue Gly-80 to Ser-87 participates in ATP binding.

Belongs to the Mg-chelatase subunits D/I family.

It catalyses the reaction protoporphyrin IX + Mg(2+) + ATP + H2O = Mg-protoporphyrin IX + ADP + phosphate + 3 H(+). Its pathway is porphyrin-containing compound metabolism; bacteriochlorophyll biosynthesis. Involved in bacteriochlorophyll biosynthesis; introduces a magnesium ion into protoporphyrin IX to yield Mg-protoporphyrin IX. This chain is Magnesium-chelatase 38 kDa subunit (bchI), found in Chlorobaculum tepidum (strain ATCC 49652 / DSM 12025 / NBRC 103806 / TLS) (Chlorobium tepidum).